The following is a 477-amino-acid chain: Trigger factor (477 aa).

In terms of domain architecture, PPIase FKBP-type spans 169–254 (EDRVTIDYLG…VKEVAKPNEL (86 aa)). A disordered region spans residues 435 to 477 (VSKEELTAEDEDAASEAKPAKKAAAKKKAAPKKKAEEGKSEEA). Over residues 454–466 (AKKAAAKKKAAPK) the composition is skewed to basic residues. Over residues 467–477 (KKAEEGKSEEA) the composition is skewed to basic and acidic residues.

This sequence belongs to the FKBP-type PPIase family. Tig subfamily.

The protein localises to the cytoplasm. The enzyme catalyses [protein]-peptidylproline (omega=180) = [protein]-peptidylproline (omega=0). Its function is as follows. Involved in protein export. Acts as a chaperone by maintaining the newly synthesized protein in an open conformation. Functions as a peptidyl-prolyl cis-trans isomerase. This chain is Trigger factor (tig), found in Brucella melitensis biotype 1 (strain ATCC 23456 / CCUG 17765 / NCTC 10094 / 16M).